The sequence spans 243 residues: Myrosinase MB2 (243 aa).

The N-linked (GlcNAc...) asparagine glycan is linked to N30. A substrate-binding site is contributed by Y51. The active-site Nucleophile is E125. Residues W173 and 180–181 (EF) contribute to the substrate site. N216 is a glycosylation site (N-linked (GlcNAc...) asparagine).

This sequence belongs to the glycosyl hydrolase 1 family. In terms of assembly, homodimer. In vacuoles called myrosin grains of a certain class of cells, myrosin cells, distributed in the cotyledons and the axis of the embryo as well as in different organs of the growing plant.

It is found in the vacuole. It catalyses the reaction a thioglucoside + H2O = a sugar + a thiol.. In terms of biological role, degradation of glucosinolates (glucose residue linked by a thioglucoside bound to an amino acid derivative) to glucose, sulfate and any of the products: thiocyanates, isothiocyanates, nitriles, epithionitriles or oxazolidine-2-thiones. This Sinapis alba (White mustard) protein is Myrosinase MB2.